Reading from the N-terminus, the 443-residue chain is MDAWSRSLERLEAEFPPEDVHTWLKPLQADLRVDSLVLYAPNAFIVDQVRELYLARIRELLAHFAGFSDVFLEIGSRPRPVEAQNAPVSTPSAHVSSEPQVPFAGNLDNHYTFANFVEGRSNQLGLAAAFQAAQKPGDRAHNPLLLYGGTGLGKTHLMFAAGNAMRQANPGAKVLYLRSEQFFSAMIRALQEKTMDQFKRQFQQVDALLIDDIQFFAGKDRTQEEFFHTFNALFDGKQQIILTCDRYPREVEGLEARLKSRLAWGLSVAIEPPDFETRAAIVLAKARERGAEIPDDVAFLIAKKMRSNVRDLEGALNTLTARANFTGRAITTEFAQETLRDLLRAQQQAISIPNIQKTVADYYGLQIKDLLSKRRTRSLARPRQVAMALTKELTEHSLPEIGDAFAGRDHTTVLHACRQIRTLMETDGKLREDWDKLIRKLSE.

Residues 1 to 67 (MDAWSRSLER…RELLAHFAGF (67 aa)) are domain I, interacts with DnaA modulators. Residues 67 to 105 (FSDVFLEIGSRPRPVEAQNAPVSTPSAHVSSEPQVPFAG) form a domain II region. The interval 106-323 (NLDNHYTFAN…GALNTLTARA (218 aa)) is domain III, AAA+ region. ATP-binding residues include G151, G153, K154, and T155. The interval 324–443 (NFTGRAITTE…WDKLIRKLSE (120 aa)) is domain IV, binds dsDNA.

It belongs to the DnaA family. Oligomerizes as a right-handed, spiral filament on DNA at oriC.

The protein localises to the cytoplasm. Plays an essential role in the initiation and regulation of chromosomal replication. ATP-DnaA binds to the origin of replication (oriC) to initiate formation of the DNA replication initiation complex once per cell cycle. Binds the DnaA box (a 9 base pair repeat at the origin) and separates the double-stranded (ds)DNA. Forms a right-handed helical filament on oriC DNA; dsDNA binds to the exterior of the filament while single-stranded (ss)DNA is stabiized in the filament's interior. The ATP-DnaA-oriC complex binds and stabilizes one strand of the AT-rich DNA unwinding element (DUE), permitting loading of DNA polymerase. After initiation quickly degrades to an ADP-DnaA complex that is not apt for DNA replication. Binds acidic phospholipids. This chain is Chromosomal replication initiator protein DnaA, found in Stenotrophomonas maltophilia (strain K279a).